The primary structure comprises 708 residues: Ion-translocating oxidoreductase complex subunit C (708 aa).

2 4Fe-4S ferredoxin-type domains span residues 369–397 and 407–436; these read GEPQ…QQLY and KATT…VQYF. Residues cysteine 377, cysteine 380, cysteine 383, cysteine 387, cysteine 416, cysteine 419, cysteine 422, and cysteine 426 each contribute to the [4Fe-4S] cluster site. Residues 663–684 form a disordered region; it reads KARKLEQQQTNAEPEEQVDPRK.

Belongs to the 4Fe4S bacterial-type ferredoxin family. RnfC subfamily. As to quaternary structure, the complex is composed of six subunits: RsxA, RsxB, RsxC, RsxD, RsxE and RsxG. The cofactor is [4Fe-4S] cluster.

It localises to the cell inner membrane. In terms of biological role, part of a membrane-bound complex that couples electron transfer with translocation of ions across the membrane. Required to maintain the reduced state of SoxR. The polypeptide is Ion-translocating oxidoreductase complex subunit C (Shigella boydii serotype 18 (strain CDC 3083-94 / BS512)).